Consider the following 440-residue polypeptide: 3-phosphoshikimate 1-carboxyvinyltransferase (440 aa).

Lysine 29 and arginine 34 together coordinate 3-phosphoshikimate. Residue lysine 29 participates in phosphoenolpyruvate binding. Residues glycine 99 and arginine 128 each coordinate phosphoenolpyruvate. The 3-phosphoshikimate site is built by serine 171, serine 172, glutamine 173, serine 199, aspartate 316, and lysine 343. Residue glutamine 173 coordinates phosphoenolpyruvate. Aspartate 316 acts as the Proton acceptor in catalysis. 3 residues coordinate phosphoenolpyruvate: arginine 347, arginine 390, and lysine 416.

The protein belongs to the EPSP synthase family. As to quaternary structure, monomer.

The protein resides in the cytoplasm. It carries out the reaction 3-phosphoshikimate + phosphoenolpyruvate = 5-O-(1-carboxyvinyl)-3-phosphoshikimate + phosphate. The protein operates within metabolic intermediate biosynthesis; chorismate biosynthesis; chorismate from D-erythrose 4-phosphate and phosphoenolpyruvate: step 6/7. Catalyzes the transfer of the enolpyruvyl moiety of phosphoenolpyruvate (PEP) to the 5-hydroxyl of shikimate-3-phosphate (S3P) to produce enolpyruvyl shikimate-3-phosphate and inorganic phosphate. This chain is 3-phosphoshikimate 1-carboxyvinyltransferase, found in Deinococcus geothermalis (strain DSM 11300 / CIP 105573 / AG-3a).